The sequence spans 168 residues: Thiol peroxidase (168 aa).

The region spanning 20 to 168 (PAVGSQLPAF…DYDKALAALA (149 aa)) is the Thioredoxin domain. Catalysis depends on Cys-62, which acts as the Cysteine sulfenic acid (-SOH) intermediate. A disulfide bridge connects residues Cys-62 and Cys-96.

Belongs to the peroxiredoxin family. Tpx subfamily. In terms of assembly, homodimer.

It catalyses the reaction a hydroperoxide + [thioredoxin]-dithiol = an alcohol + [thioredoxin]-disulfide + H2O. Its function is as follows. Thiol-specific peroxidase that catalyzes the reduction of hydrogen peroxide and organic hydroperoxides to water and alcohols, respectively. Plays a role in cell protection against oxidative stress by detoxifying peroxides. The protein is Thiol peroxidase of Chlorobaculum tepidum (strain ATCC 49652 / DSM 12025 / NBRC 103806 / TLS) (Chlorobium tepidum).